An 85-amino-acid chain; its full sequence is Beta-toxin Ct6 (85 aa).

A signal peptide spans 1-18 (MKTFVLALCLVLIGMVYA). Residues 19–84 (KDGYLVSKHT…VYPLPNKSCG (66 aa)) enclose the LCN-type CS-alpha/beta domain. 4 disulfide bridges follow: Cys30–Cys83, Cys34–Cys59, Cys43–Cys64, and Cys47–Cys66. Residue Cys83 is modified to Cysteine amide.

Belongs to the long (4 C-C) scorpion toxin superfamily. Sodium channel inhibitor family. Beta subfamily. Expressed by the venom gland.

The protein resides in the secreted. Its function is as follows. Beta toxins bind voltage-independently at site-4 of sodium channels (Nav) and shift the voltage of activation toward more negative potentials thereby affecting sodium channel activation and promoting spontaneous and repetitive firing. This chain is Beta-toxin Ct6, found in Centruroides tecomanus (Scorpion).